We begin with the raw amino-acid sequence, 286 residues long: Shikimate dehydrogenase (NADP(+)) (286 aa).

Residues 22 to 24 (SFS) and T69 each bind shikimate. The active-site Proton acceptor is K73. E85 provides a ligand contact to NADP(+). N94 and D109 together coordinate shikimate. Residues 133–137 (GAGGA), 157–162 (NRTIDK), and L231 each bind NADP(+). Shikimate is bound at residue Y233. G254 contributes to the NADP(+) binding site.

It belongs to the shikimate dehydrogenase family. In terms of assembly, homodimer.

It catalyses the reaction shikimate + NADP(+) = 3-dehydroshikimate + NADPH + H(+). It functions in the pathway metabolic intermediate biosynthesis; chorismate biosynthesis; chorismate from D-erythrose 4-phosphate and phosphoenolpyruvate: step 4/7. Its function is as follows. Involved in the biosynthesis of the chorismate, which leads to the biosynthesis of aromatic amino acids. Catalyzes the reversible NADPH linked reduction of 3-dehydroshikimate (DHSA) to yield shikimate (SA). This Alkaliphilus oremlandii (strain OhILAs) (Clostridium oremlandii (strain OhILAs)) protein is Shikimate dehydrogenase (NADP(+)).